The sequence spans 193 residues: Phosphoheptose isomerase (193 aa).

The SIS domain maps to 37–193; the sequence is LADSFKAGGK…MLIEKEMAKG (157 aa). 52–54 contributes to the substrate binding site; the sequence is NGG. His-61 and Glu-65 together coordinate Zn(2+). Residues Glu-65, 93-94, 119-121, Ser-124, and Gln-172 contribute to the substrate site; these read ND and STS. Residues Gln-172 and His-180 each contribute to the Zn(2+) site.

It belongs to the SIS family. GmhA subfamily. As to quaternary structure, homotetramer. Zn(2+) is required as a cofactor.

The protein localises to the cytoplasm. It catalyses the reaction 2 D-sedoheptulose 7-phosphate = D-glycero-alpha-D-manno-heptose 7-phosphate + D-glycero-beta-D-manno-heptose 7-phosphate. It functions in the pathway carbohydrate biosynthesis; D-glycero-D-manno-heptose 7-phosphate biosynthesis; D-glycero-alpha-D-manno-heptose 7-phosphate and D-glycero-beta-D-manno-heptose 7-phosphate from sedoheptulose 7-phosphate: step 1/1. Its function is as follows. Catalyzes the isomerization of sedoheptulose 7-phosphate in D-glycero-D-manno-heptose 7-phosphate. In Klebsiella pneumoniae subsp. pneumoniae (strain ATCC 700721 / MGH 78578), this protein is Phosphoheptose isomerase.